A 613-amino-acid polypeptide reads, in one-letter code: DNA mismatch repair protein MutL (613 aa).

The protein belongs to the DNA mismatch repair MutL/HexB family.

In terms of biological role, this protein is involved in the repair of mismatches in DNA. It is required for dam-dependent methyl-directed DNA mismatch repair. May act as a 'molecular matchmaker', a protein that promotes the formation of a stable complex between two or more DNA-binding proteins in an ATP-dependent manner without itself being part of a final effector complex. This Bradyrhizobium sp. (strain ORS 278) protein is DNA mismatch repair protein MutL.